Consider the following 123-residue polypeptide: Large ribosomal subunit protein bL20 (123 aa).

It belongs to the bacterial ribosomal protein bL20 family.

Binds directly to 23S ribosomal RNA and is necessary for the in vitro assembly process of the 50S ribosomal subunit. It is not involved in the protein synthesizing functions of that subunit. This chain is Large ribosomal subunit protein bL20 (rplT), found in Chlamydia trachomatis serovar D (strain ATCC VR-885 / DSM 19411 / UW-3/Cx).